The primary structure comprises 37 residues: Large ribosomal subunit protein bL36 (37 aa).

Belongs to the bacterial ribosomal protein bL36 family.

The sequence is that of Large ribosomal subunit protein bL36 from Thermomicrobium roseum (strain ATCC 27502 / DSM 5159 / P-2).